The following is a 478-amino-acid chain: ATP synthase subunit beta (478 aa).

164-171 serves as a coordination point for ATP; that stretch reads GGAGVGKT.

This sequence belongs to the ATPase alpha/beta chains family. As to quaternary structure, F-type ATPases have 2 components, CF(1) - the catalytic core - and CF(0) - the membrane proton channel. CF(1) has five subunits: alpha(3), beta(3), gamma(1), delta(1), epsilon(1). CF(0) has three main subunits: a(1), b(2) and c(9-12). The alpha and beta chains form an alternating ring which encloses part of the gamma chain. CF(1) is attached to CF(0) by a central stalk formed by the gamma and epsilon chains, while a peripheral stalk is formed by the delta and b chains.

The protein resides in the cell membrane. The catalysed reaction is ATP + H2O + 4 H(+)(in) = ADP + phosphate + 5 H(+)(out). Functionally, produces ATP from ADP in the presence of a proton gradient across the membrane. The catalytic sites are hosted primarily by the beta subunits. In Corynebacterium kroppenstedtii (strain DSM 44385 / JCM 11950 / CIP 105744 / CCUG 35717), this protein is ATP synthase subunit beta.